The primary structure comprises 172 residues: uncharacterized protein (172 aa).

This is an uncharacterized protein from Saccharomyces cerevisiae (strain ATCC 204508 / S288c) (Baker's yeast).